An 80-amino-acid polypeptide reads, in one-letter code: UPF0248 protein MJ1316 (80 aa).

It belongs to the UPF0248 family.

In Methanocaldococcus jannaschii (strain ATCC 43067 / DSM 2661 / JAL-1 / JCM 10045 / NBRC 100440) (Methanococcus jannaschii), this protein is UPF0248 protein MJ1316.